A 141-amino-acid chain; its full sequence is Hemoglobin subunit alpha (141 aa).

A Globin domain is found at 1–141; that stretch reads VLSAADKAHV…VSTVLTSKYR (141 aa). At S3 the chain carries Phosphoserine. An N6-succinyllysine mark is found at K7 and K11. K16 carries the N6-acetyllysine; alternate modification. K16 carries the post-translational modification N6-succinyllysine; alternate. Y24 carries the phosphotyrosine modification. S35 carries the phosphoserine modification. K40 carries the post-translational modification N6-succinyllysine. Residue S49 is modified to Phosphoserine. H58 contributes to the O2 binding site. H87 provides a ligand contact to heme b. Residue T108 is modified to Phosphothreonine. S124 carries the phosphoserine modification. Phosphothreonine is present on residues T134 and T137. A Phosphoserine modification is found at S138.

Belongs to the globin family. In terms of assembly, heterotetramer of two alpha chains and two beta chains. Red blood cells.

Functionally, involved in oxygen transport from the lung to the various peripheral tissues. In terms of biological role, hemopressin acts as an antagonist peptide of the cannabinoid receptor CNR1. Hemopressin-binding efficiently blocks cannabinoid receptor CNR1 and subsequent signaling. The chain is Hemoglobin subunit alpha (HBA) from Bradypus tridactylus (Pale-throated three-toed sloth).